The primary structure comprises 322 residues: Elongation factor P--(R)-beta-lysine ligase (322 aa).

Position 75-77 (75-77 (SPE)) interacts with substrate. 99–101 (RNE) contacts ATP. Tyrosine 117 is a substrate binding site. ATP is bound at residue 241-242 (EL). Glutamate 248 is a binding site for substrate. Residue glycine 297 participates in ATP binding.

The protein belongs to the class-II aminoacyl-tRNA synthetase family. EpmA subfamily. Homodimer.

It catalyses the reaction D-beta-lysine + L-lysyl-[protein] + ATP = N(6)-((3R)-3,6-diaminohexanoyl)-L-lysyl-[protein] + AMP + diphosphate + H(+). Functionally, with EpmB is involved in the beta-lysylation step of the post-translational modification of translation elongation factor P (EF-P). Catalyzes the ATP-dependent activation of (R)-beta-lysine produced by EpmB, forming a lysyl-adenylate, from which the beta-lysyl moiety is then transferred to the epsilon-amino group of a conserved specific lysine residue in EF-P. This chain is Elongation factor P--(R)-beta-lysine ligase, found in Avibacterium paragallinarum (Haemophilus gallinarum).